An 814-amino-acid polypeptide reads, in one-letter code: Echinoderm microtubule-associated protein-like 1 (814 aa).

Residues 31–72 (SMEISDRIASLEQRVQMQEDDIQLLKSALADVVRRLNITEEQ) adopt a coiled-coil conformation. The tract at residues 77–185 (NRKGPTKARP…EPTFSPEEGY (109 aa)) is disordered. A compositionally biased stretch (polar residues) spans 92–101 (PLRTTVNNGT). Low complexity predominate over residues 103–115 (LPKKPSASLPSPS). At Ser-113 the chain carries Phosphoserine. Residues 127–137 (KSINRTSSSER) are compositionally biased toward polar residues. A compositionally biased stretch (basic and acidic residues) spans 142–152 (GRRESSGDSKG). The span at 155–167 (NRTGSTSSSSSGK) shows a compositional bias: low complexity. Positions 175–814 (KEPTFSPEEG…DTSIMQWRVI (640 aa)) are tandem atypical propeller in EMLs. WD repeat units lie at residues 260–309 (EQLQ…IWDS), 314–357 (TLHV…VWDW), 362–399 (RLAD…FWTL), 408–445 (QGLF…VWGK), 449–488 (RISY…SWNG), 492–529 (KLHK…LQGT), 534–571 (FTPI…LWDA), 577–612 (VWDK…VFDT), 616–654 (DLVT…IYGV), 663–700 (RVGK…YWVP), 708–767 (SVET…LFSY), and 774–813 (APSH…QWRV).

This sequence belongs to the WD repeat EMAP family. As to quaternary structure, homotrimer; self-association is mediated by the N-terminal coiled coil. Does not interact with EML3. Binds repolymerizing microtubules. Binds unpolymerized tubulins via its WD repeat region. Interacts with TASOR.

It is found in the cytoplasm. The protein localises to the perinuclear region. Its subcellular location is the cytoskeleton. Modulates the assembly and organization of the microtubule cytoskeleton, and probably plays a role in regulating the orientation of the mitotic spindle and the orientation of the plane of cell division. Required for normal proliferation of neuronal progenitor cells in the developing brain and for normal brain development. Does not affect neuron migration per se. The chain is Echinoderm microtubule-associated protein-like 1 (Eml1) from Rattus norvegicus (Rat).